Reading from the N-terminus, the 127-residue chain is DNA-directed RNA polymerase subunit omega (127 aa).

Belongs to the RNA polymerase subunit omega family. As to quaternary structure, the RNAP catalytic core consists of 2 alpha, 1 beta, 1 beta' and 1 omega subunit. When a sigma factor is associated with the core the holoenzyme is formed, which can initiate transcription.

The catalysed reaction is RNA(n) + a ribonucleoside 5'-triphosphate = RNA(n+1) + diphosphate. Promotes RNA polymerase assembly. Latches the N- and C-terminal regions of the beta' subunit thereby facilitating its interaction with the beta and alpha subunits. This chain is DNA-directed RNA polymerase subunit omega, found in Rickettsia peacockii (strain Rustic).